The sequence spans 638 residues: Cytoplasmic dynein 1 intermediate chain 2 (638 aa).

Basic and acidic residues-rich tracts occupy residues 1 to 13 (MSDK…ELER) and 20 to 43 (QIRE…KKEA). 2 disordered regions span residues 1-135 (MSDK…GRGP) and 154-209 (VTYT…HELT). Ser2 carries the post-translational modification N-acetylserine. Ser51 carries the post-translational modification Diphosphoserine. 2 positions are modified to phosphoserine: Ser51 and Ser90. The span at 88–97 (PSSKSVSTPS) shows a compositional bias: low complexity. Thr95 is modified (phosphothreonine). Phosphoserine occurs at positions 97, 101, and 104. Positions 133–165 (RGPIKLGMAKITQVDFPPREIVTYTKETQTPVT) are interaction with DYNLT1. Over residues 190–209 (EKILKKDEENDSKAPPHELT) the composition is skewed to basic and acidic residues. WD repeat units lie at residues 277–326 (SKHR…TTPE), 330–370 (HCQS…RTPV), 379–420 (AHTH…HPQD), 429–469 (SKAV…AGIS), 474–519 (GHQG…PLYS), and 568–607 (EGNP…AVPR).

The protein belongs to the dynein intermediate chain family. In terms of assembly, homodimer. The cytoplasmic dynein 1 complex consists of two catalytic heavy chains (HCs) and a number of non-catalytic subunits presented by intermediate chains (ICs), light intermediate chains (LICs) and light chains (LCs); the composition seems to vary in respect to the IC, LIC and LC composition. The heavy chain homodimer serves as a scaffold for the probable homodimeric assembly of the respective non-catalytic subunits. The ICs and LICs bind directly to the HC dimer and the LCs assemble on the IC dimer. Interacts with DYNLT3. Interacts with DYNLT1. Interacts (dephosphorylated at Ser-90) with DCTN1. Interacts with BICD2. Interacts with SPEF2. Interacts with CFAP61. In terms of processing, the phosphorylation status of Ser-90 appears to be involved in dynactin-dependent target binding. Pyrophosphorylation by 5-diphosphoinositol pentakisphosphate (5-IP7) promotes interaction with DCTN1. Serine pyrophosphorylation is achieved by Mg(2+)-dependent, but enzyme independent transfer of a beta-phosphate from a inositol pyrophosphate to a pre-phosphorylated serine residue. In terms of tissue distribution, skeletal muscle, testis, kidney, brain, heart and spleen.

The protein localises to the cytoplasm. Its subcellular location is the cytoskeleton. Acts as one of several non-catalytic accessory components of the cytoplasmic dynein 1 complex that are thought to be involved in linking dynein to cargos and to adapter proteins that regulate dynein function. Cytoplasmic dynein 1 acts as a motor for the intracellular retrograde motility of vesicles and organelles along microtubules. The intermediate chains mediate the binding of dynein to dynactin via its 150 kDa component (p150-glued) DCTN1. Involved in membrane-transport, such as Golgi apparatus, late endosomes and lysosomes. The polypeptide is Cytoplasmic dynein 1 intermediate chain 2 (Dync1i2) (Rattus norvegicus (Rat)).